The sequence spans 208 residues: Small ribosomal subunit protein eS1 (208 aa).

The protein belongs to the eukaryotic ribosomal protein eS1 family.

The sequence is that of Small ribosomal subunit protein eS1 from Saccharolobus islandicus (strain Y.N.15.51 / Yellowstone #2) (Sulfolobus islandicus).